A 172-amino-acid chain; its full sequence is Phosphopantetheine adenylyltransferase (172 aa).

Thr-13 serves as a coordination point for substrate. Residues 13–14 (TF) and His-21 contribute to the ATP site. Substrate is bound by residues Lys-45, Leu-81, and Arg-95. ATP is bound by residues 96–98 (GLR), Glu-106, and 131–137 (SQFISSR).

The protein belongs to the bacterial CoaD family. As to quaternary structure, homohexamer. Requires Mg(2+) as cofactor.

The protein localises to the cytoplasm. The enzyme catalyses (R)-4'-phosphopantetheine + ATP + H(+) = 3'-dephospho-CoA + diphosphate. It functions in the pathway cofactor biosynthesis; coenzyme A biosynthesis; CoA from (R)-pantothenate: step 4/5. Its function is as follows. Reversibly transfers an adenylyl group from ATP to 4'-phosphopantetheine, yielding dephospho-CoA (dPCoA) and pyrophosphate. The protein is Phosphopantetheine adenylyltransferase of Rhodospirillum rubrum (strain ATCC 11170 / ATH 1.1.1 / DSM 467 / LMG 4362 / NCIMB 8255 / S1).